The primary structure comprises 42 residues: Aspartate-semialdehyde dehydrogenase leader peptide (42 aa).

This Streptococcus mutans serotype c (strain ATCC 700610 / UA159) protein is Aspartate-semialdehyde dehydrogenase leader peptide.